Reading from the N-terminus, the 430-residue chain is Probable WRKY transcription factor 14 (430 aa).

The WRKY DNA-binding region spans 211 to 277; it reads SGEVVPSDLW…YTSEHNHPWP (67 aa). The disordered stretch occupies residues 283–366; the sequence is LAGSTRSSTS…APYRPELHDH (84 aa). The segment covering 286-306 has biased composition (low complexity); sequence STRSSTSSSSNPNPSKPSTAN. Residues 307–319 show a composition bias toward polar residues; that stretch reads VNSSSIGSQNTIY. The span at 340–354 shows a compositional bias: acidic residues; that stretch reads GDDMELENVDDDDDN.

This sequence belongs to the WRKY group II-e family.

It is found in the nucleus. Transcription factor. Interacts specifically with the W box (5'-(T)TGAC[CT]-3'), a frequently occurring elicitor-responsive cis-acting element. The polypeptide is Probable WRKY transcription factor 14 (WRKY14) (Arabidopsis thaliana (Mouse-ear cress)).